The following is a 291-amino-acid chain: Prolyl 4-hydroxylase 5 (291 aa).

Topologically, residues 1–22 (MASKSKQHLRYQPRKSVSRSTQ) are cytoplasmic. The helical; Signal-anchor for type II membrane protein transmembrane segment at 23–43 (AFTVLILLLVVILILLGLGIL) threads the bilayer. Residues 44–291 (SLPNANRNSS…KWFHVHEFKV (248 aa)) are Extracellular-facing. A glycan (N-linked (GlcNAc...) asparagine) is linked at Asn51. One can recognise a Fe2OG dioxygenase domain in the interval 163–286 (NGEGLQVLHY…KWSSTKWFHV (124 aa)). Residues His181 and Asp183 each coordinate Fe cation. The N-linked (GlcNAc...) asparagine glycan is linked to Asn222. His267 lines the Fe cation pocket. 2-oxoglutarate is bound at residue Lys277.

The protein belongs to the P4HA family. Requires Fe(2+) as cofactor. L-ascorbate serves as cofactor. As to expression, expressed in epidermal root hair cells (trichoblasts).

It is found in the endoplasmic reticulum membrane. It localises to the golgi apparatus membrane. The catalysed reaction is L-prolyl-[collagen] + 2-oxoglutarate + O2 = trans-4-hydroxy-L-prolyl-[collagen] + succinate + CO2. Catalyzes the post-translational formation of 4-hydroxyproline in -Xaa-Pro-Gly- sequences in proline-rich peptide sequences of plant glycoproteins and other proteins. Hydroxyprolines are important constituent of many plant cell wall glycoproteins such as extensins, hydroxyproline-rich glycoproteins, lectins and arabinogalactan proteins. Possesses high affinity for leucine-rich repeat and proline-rich extensins of root cell walls that are essential for root hair development. Hydroxyprolines define the subsequent O-glycosylation sites by arabinosyltransferases which elongate the O-arabinosides on extensins. The protein is Prolyl 4-hydroxylase 5 of Arabidopsis thaliana (Mouse-ear cress).